Here is a 203-residue protein sequence, read N- to C-terminus: ATP-dependent Clp protease proteolytic subunit (203 aa).

Catalysis depends on S107, which acts as the Nucleophile. The active site involves H132.

Belongs to the peptidase S14 family. In terms of assembly, fourteen ClpP subunits assemble into 2 heptameric rings which stack back to back to give a disk-like structure with a central cavity, resembling the structure of eukaryotic proteasomes.

The protein resides in the cytoplasm. The catalysed reaction is Hydrolysis of proteins to small peptides in the presence of ATP and magnesium. alpha-casein is the usual test substrate. In the absence of ATP, only oligopeptides shorter than five residues are hydrolyzed (such as succinyl-Leu-Tyr-|-NHMec, and Leu-Tyr-Leu-|-Tyr-Trp, in which cleavage of the -Tyr-|-Leu- and -Tyr-|-Trp bonds also occurs).. Its function is as follows. Cleaves peptides in various proteins in a process that requires ATP hydrolysis. Has a chymotrypsin-like activity. Plays a major role in the degradation of misfolded proteins. This Thermotoga maritima (strain ATCC 43589 / DSM 3109 / JCM 10099 / NBRC 100826 / MSB8) protein is ATP-dependent Clp protease proteolytic subunit.